Reading from the N-terminus, the 423-residue chain is Putative serpin-Z12 (423 aa).

Residues methionine 1–valine 25 form a disordered region. The segment at glycine 370–valine 394 is RCL.

Belongs to the serpin family.

In terms of biological role, probable serine protease inhibitor. This Oryza sativa subsp. japonica (Rice) protein is Putative serpin-Z12.